A 384-amino-acid polypeptide reads, in one-letter code: Urea transporter 1 (384 aa).

A disordered region spans residues 1-23 (MDDNPTAVKLDQGGNQAPQGQGR). A run of 5 helical transmembrane segments spans residues 61-81 (ISQV…VGLL), 85-105 (PWCA…ALLL), 111-131 (AITA…MAIY), 138-158 (FWWL…FSSA), and 168-188 (LPVF…ATGH). An N-linked (GlcNAc...) asparagine glycan is attached at N206. A run of 3 helical transmembrane segments spans residues 237–257 (GGIF…HAAI), 279–299 (GLWG…FMAL), and 327–347 (VVGL…FLLL).

This sequence belongs to the urea transporter family. As to quaternary structure, homotrimer; each subunit contains a pore through which urea permeates. Identified in a complex with STOM.

It is found in the cell membrane. Its subcellular location is the basolateral cell membrane. The catalysed reaction is urea(in) = urea(out). Mediates the transport of urea driven by a concentration gradient across the cell membranes of erythrocytes and the renal inner medullary collecting duct which is critical to the urinary concentrating mechanism. Facilitates water transport in erythrocytes. This chain is Urea transporter 1 (SLC14A1), found in Capra hircus (Goat).